A 195-amino-acid chain; its full sequence is Interferon omega-1 (195 aa).

The signal sequence occupies residues 1–23 (MAFSVSSLMALVVISSSPVSSMS). Intrachain disulfides connect Cys24/Cys122 and Cys52/Cys162. Asn101 carries N-linked (GlcNAc...) asparagine glycosylation.

Belongs to the alpha/beta interferon family.

Its subcellular location is the secreted. The polypeptide is Interferon omega-1 (Equus caballus (Horse)).